The primary structure comprises 347 residues: GMP reductase (347 aa).

Residue 108 to 131 (ADFEKTVQILALNPALNFVCIDVA) participates in NADP(+) binding. K(+) is bound by residues glycine 181 and glycine 183. The Thioimidate intermediate role is filled by cysteine 186. 216–239 (IVSDGGCTMPGDVAKAFGGGADFV) contacts NADP(+).

This sequence belongs to the IMPDH/GMPR family. GuaC type 1 subfamily. Homotetramer.

It catalyses the reaction IMP + NH4(+) + NADP(+) = GMP + NADPH + 2 H(+). In terms of biological role, catalyzes the irreversible NADPH-dependent deamination of GMP to IMP. It functions in the conversion of nucleobase, nucleoside and nucleotide derivatives of G to A nucleotides, and in maintaining the intracellular balance of A and G nucleotides. This chain is GMP reductase, found in Salmonella paratyphi C (strain RKS4594).